The chain runs to 261 residues: uncharacterized protein (261 aa).

The HTH tetR-type domain maps to 15–75 (SINPEDIISG…AMTDRALSKY (61 aa)). Residues 38-57 (SMPLLGKHLGVGVTSIYWYF) constitute a DNA-binding region (H-T-H motif). The disordered stretch occupies residues 234-261 (AAGEVAVRRPTATADAPTPGARAKAVAR). A compositionally biased stretch (low complexity) spans 241 to 261 (RRPTATADAPTPGARAKAVAR).

This is an uncharacterized protein from Mycobacterium bovis (strain ATCC BAA-935 / AF2122/97).